The following is a 173-amino-acid chain: Photosystem I assembly protein Ycf3 (173 aa).

3 TPR repeats span residues 35–68, 72–105, and 120–153; these read AYVYYRDGLSAQNDGDYAEALENYEESLKLEENA, GETLKNIAIIYMSNGEEERALETYQKALDENPKQ, and GRTAEEEGRRDDADGWFDQAANVWTQAVRLNPGG.

It belongs to the Ycf3 family.

The protein resides in the cellular thylakoid membrane. Essential for the assembly of the photosystem I (PSI) complex. May act as a chaperone-like factor to guide the assembly of the PSI subunits. The sequence is that of Photosystem I assembly protein Ycf3 from Synechococcus sp. (strain CC9311).